A 226-amino-acid chain; its full sequence is MHLTKEKFIKLSMISSIIILCIAIVSVILFGVQQFKIGSQLASVNQVSNLSHLLIRQQANLLSMLLVNNASTEQLTESLDAFAKEEFVLDASIYSNRGELLAHTSHFQNLRLTLGLNSPTQPDEENTQQIVEPIYSLNGIEGFLRVTFDSKYGKTTQSKIDHLFHQLYGELIIIFLAGVLLASSIHYFLSHYRRTYRKVTENKAVKVLKTKQNVGNYHRRRRRLNK.

A run of 2 helical transmembrane segments spans residues 12–32 and 169–189; these read SMISSIIILCIAIVSVILFGV and GELIIIFLAGVLLASSIHYFL.

Belongs to the Smp family.

Its subcellular location is the cell inner membrane. Its function is as follows. When anaerobically expressed in wild-type E.coli K12 confers a hemolytic phenotype, but not in an sheA mutant. Suggests it affects the expression of the latent E.coli K12 hemolysin sheA under anaerobic conditions. The chain is Protein AhpA (ahpA) from Pasteurella multocida (strain Pm70).